The chain runs to 208 residues: Cytochrome c biogenesis ATP-binding export protein CcmA (208 aa).

Positions 2-206 constitute an ABC transporter domain; sequence LEAKELTCAR…IRLTAEGRDE (205 aa). 34 to 41 contacts ATP; the sequence is GPNGAGKT.

The protein belongs to the ABC transporter superfamily. CcmA exporter (TC 3.A.1.107) family. In terms of assembly, the complex is composed of two ATP-binding proteins (CcmA) and two transmembrane proteins (CcmB).

The protein localises to the cell inner membrane. It carries out the reaction heme b(in) + ATP + H2O = heme b(out) + ADP + phosphate + H(+). Its function is as follows. Part of the ABC transporter complex CcmAB involved in the biogenesis of c-type cytochromes; once thought to export heme, this seems not to be the case, but its exact role is uncertain. Responsible for energy coupling to the transport system. The sequence is that of Cytochrome c biogenesis ATP-binding export protein CcmA from Tatumella citrea (Pantoea citrea).